A 666-amino-acid polypeptide reads, in one-letter code: Adenylylsulfate reductase subunit alpha (666 aa).

FAD is bound by residues 32-35, 60-61, 67-69, N78, I193, S259, S417, 461-462, and S472; these read GGMG, DK, SGA, and AD.

The protein belongs to the FAD-dependent oxidoreductase 2 family. In terms of assembly, heterodimer composed of AprA and AprB. The heterodimers can dimerize to form heterotetramers. FAD is required as a cofactor.

It localises to the cytoplasm. The enzyme catalyses sulfite + A + AMP + 2 H(+) = adenosine 5'-phosphosulfate + AH2. Catalytic subunit of the adenylylsulfate reductase which catalyzes reversibly the reduction of adenosine 5'-phosphosulfate (APS) to sulfite and AMP during dissimilatory sulfate reduction. The polypeptide is Adenylylsulfate reductase subunit alpha (Megalodesulfovibrio gigas (strain ATCC 19364 / DSM 1382 / NCIMB 9332 / VKM B-1759) (Desulfovibrio gigas)).